The following is a 459-amino-acid chain: Putrescine aminotransferase (459 aa).

Pyridoxal 5'-phosphate contacts are provided by residues 150-151 (GT) and Gln274. Residue Lys300 is modified to N6-(pyridoxal phosphate)lysine. Residue Thr332 participates in pyridoxal 5'-phosphate binding.

Belongs to the class-III pyridoxal-phosphate-dependent aminotransferase family. Putrescine aminotransferase subfamily. Pyridoxal 5'-phosphate serves as cofactor.

It carries out the reaction an alkane-alpha,omega-diamine + 2-oxoglutarate = an omega-aminoaldehyde + L-glutamate. The catalysed reaction is putrescine + 2-oxoglutarate = 1-pyrroline + L-glutamate + H2O. It catalyses the reaction cadaverine + 2-oxoglutarate = 5-aminopentanal + L-glutamate. It participates in amine and polyamine degradation; putrescine degradation; 4-aminobutanal from putrescine (transaminase route): step 1/1. Its function is as follows. Catalyzes the aminotransferase reaction from putrescine to 2-oxoglutarate, leading to glutamate and 4-aminobutanal, which spontaneously cyclizes to form 1-pyrroline. This is the first step in one of two pathways for putrescine degradation, where putrescine is converted into 4-aminobutanoate (gamma-aminobutyrate or GABA) via 4-aminobutanal. Also functions as a cadaverine transaminase in a a L-lysine degradation pathway to succinate that proceeds via cadaverine, glutarate and L-2-hydroxyglutarate. This Salmonella paratyphi B (strain ATCC BAA-1250 / SPB7) protein is Putrescine aminotransferase.